The following is a 484-amino-acid chain: Adenylyltransferase and sulfurtransferase uba4 (484 aa).

Low complexity predominate over residues 39 to 49 (AKAQSAAATTA). Residues 39 to 58 (AKAQSAAATTAGDNHDKPRR) are disordered. ATP-binding positions include G98, D119, 126–130 (SNLHR), K143, and 187–188 (DN). C236 and C239 together coordinate Zn(2+). The active-site Glycyl thioester intermediate; for adenylyltransferase activity is the C253. Zn(2+) is bound by residues C313 and C316. The region spanning 370-482 (PEKTPTLIDV…WREQVDPEWP (113 aa)) is the Rhodanese domain. The active-site Cysteine persulfide intermediate; for sulfurtransferase activity is the C437.

It in the N-terminal section; belongs to the HesA/MoeB/ThiF family. UBA4 subfamily. It depends on Zn(2+) as a cofactor.

It is found in the cytoplasm. Its subcellular location is the cytosol. The enzyme catalyses [molybdopterin-synthase sulfur-carrier protein]-C-terminal Gly-Gly + ATP + H(+) = [molybdopterin-synthase sulfur-carrier protein]-C-terminal Gly-Gly-AMP + diphosphate. It catalyses the reaction [molybdopterin-synthase sulfur-carrier protein]-C-terminal Gly-Gly-AMP + S-sulfanyl-L-cysteinyl-[cysteine desulfurase] + AH2 = [molybdopterin-synthase sulfur-carrier protein]-C-terminal-Gly-aminoethanethioate + L-cysteinyl-[cysteine desulfurase] + A + AMP + 2 H(+). The protein operates within tRNA modification; 5-methoxycarbonylmethyl-2-thiouridine-tRNA biosynthesis. It functions in the pathway cofactor biosynthesis; molybdopterin biosynthesis. Its function is as follows. Plays a central role in 2-thiolation of mcm(5)S(2)U at tRNA wobble positions of cytosolic tRNA(Lys), tRNA(Glu) and tRNA(Gln). Also essential during biosynthesis of the molybdenum cofactor. Acts by mediating the C-terminal thiocarboxylation of sulfur carriers urm1 and mocs2a. Its N-terminus first activates urm1 and mocs2a as acyl-adenylates (-COAMP), then the persulfide sulfur on the catalytic cysteine is transferred to urm1 and mocs2a to form thiocarboxylation (-COSH) of their C-terminus. The reaction probably involves hydrogen sulfide that is generated from the persulfide intermediate and that acts as a nucleophile towards urm1 and mocs2a. Subsequently, a transient disulfide bond is formed. Does not use thiosulfate as sulfur donor; nfs1 probably acting as a sulfur donor for thiocarboxylation reactions. In Aspergillus terreus (strain NIH 2624 / FGSC A1156), this protein is Adenylyltransferase and sulfurtransferase uba4.